Reading from the N-terminus, the 315-residue chain is Ester hydrolase C11orf54 (315 aa).

Residues His-266, His-268, and His-278 each coordinate Zn(2+).

In terms of assembly, monomer. Zn(2+) serves as cofactor.

Its subcellular location is the nucleus. The protein resides in the cytoplasm. Its function is as follows. Exhibits ester hydrolase activity on the substrate p-nitrophenyl acetate, in vitro. Regulates DNA damage and repair by regulating HIF1A degradation via chaperone-mediated autophagy (CMA). Functionally, probably non-functional. The chain is Ester hydrolase C11orf54 (C11orf54) from Homo sapiens (Human).